The following is a 388-amino-acid chain: Pepsin A-2/A-3 (388 aa).

The N-terminal stretch at 1 to 15 (MKWLLLLGLVALSEC) is a signal peptide. Propeptides (activation peptide) lie at residues 16–40 (IIHKVPLVRKKSLRRNLSEHGLLKD) and 41–62 (FLKKHNFNPASKYFPQAEAPTL). The Peptidase A1 domain occupies 76–385 (YFGTIGIGTP…DRANNQVGLA (310 aa)). Asp94 is an active-site residue. A disulfide bond links Cys107 and Cys112. Ser130 is modified (phosphoserine). A disulfide bridge connects residues Cys268 and Cys272. The active site involves Asp277. Cys311 and Cys344 are disulfide-bonded.

It belongs to the peptidase A1 family. Pepsin A-2 is phosphorylated, but not pepsin A-3. In terms of processing, each pepsinogen is converted to corresponding pepsin at pH 2.0 in part as a result of the release of a 47 AA activation segment and in part as a result of stepwise proteolytic cleavage via an intermediate form(s).

It is found in the secreted. The catalysed reaction is Preferential cleavage: hydrophobic, preferably aromatic, residues in P1 and P1' positions. Cleaves 1-Phe-|-Val-2, 4-Gln-|-His-5, 13-Glu-|-Ala-14, 14-Ala-|-Leu-15, 15-Leu-|-Tyr-16, 16-Tyr-|-Leu-17, 23-Gly-|-Phe-24, 24-Phe-|-Phe-25 and 25-Phe-|-Tyr-26 bonds in the B chain of insulin.. In terms of biological role, shows particularly broad specificity; although bonds involving phenylalanine and leucine are preferred, many others are also cleaved to some extent. The polypeptide is Pepsin A-2/A-3 (Macaca fuscata fuscata (Japanese macaque)).